We begin with the raw amino-acid sequence, 250 residues long: 3-deoxy-manno-octulosonate cytidylyltransferase (250 aa).

Belongs to the KdsB family.

The protein resides in the cytoplasm. It catalyses the reaction 3-deoxy-alpha-D-manno-oct-2-ulosonate + CTP = CMP-3-deoxy-beta-D-manno-octulosonate + diphosphate. It functions in the pathway nucleotide-sugar biosynthesis; CMP-3-deoxy-D-manno-octulosonate biosynthesis; CMP-3-deoxy-D-manno-octulosonate from 3-deoxy-D-manno-octulosonate and CTP: step 1/1. The protein operates within bacterial outer membrane biogenesis; lipopolysaccharide biosynthesis. Functionally, activates KDO (a required 8-carbon sugar) for incorporation into bacterial lipopolysaccharide in Gram-negative bacteria. The sequence is that of 3-deoxy-manno-octulosonate cytidylyltransferase from Yersinia enterocolitica serotype O:8 / biotype 1B (strain NCTC 13174 / 8081).